We begin with the raw amino-acid sequence, 361 residues long: Holliday junction branch migration complex subunit RuvB (361 aa).

2 stretches are compositionally biased toward basic and acidic residues: residues 1 to 13 and 33 to 43; these read MSDV…KLPE and QGEHDIERSLR. A disordered region spans residues 1–43; it reads MSDVERTEFKLPEGMDLSSPPQRNQDVDAAEQQGEHDIERSLR. Residues 2-203 form a large ATPase domain (RuvB-L) region; the sequence is SDVERTEFKL…FGFTAQMEYY (202 aa). ATP-binding positions include leucine 42, arginine 43, glycine 84, lysine 87, threonine 88, threonine 89, 150–152, arginine 193, tyrosine 203, and arginine 240; that span reads EDF. Threonine 88 contacts Mg(2+). The small ATPAse domain (RuvB-S) stretch occupies residues 204-274; that stretch reads DTEDLTRVIS…AAQAALRVFD (71 aa). Positions 277-361 are head domain (RuvB-H); the sequence is ERGLDRLDRA…PEGAIGGTLF (85 aa). Residues arginine 332 and arginine 337 each contribute to the DNA site.

The protein belongs to the RuvB family. Homohexamer. Forms an RuvA(8)-RuvB(12)-Holliday junction (HJ) complex. HJ DNA is sandwiched between 2 RuvA tetramers; dsDNA enters through RuvA and exits via RuvB. An RuvB hexamer assembles on each DNA strand where it exits the tetramer. Each RuvB hexamer is contacted by two RuvA subunits (via domain III) on 2 adjacent RuvB subunits; this complex drives branch migration. In the full resolvosome a probable DNA-RuvA(4)-RuvB(12)-RuvC(2) complex forms which resolves the HJ.

The protein resides in the cytoplasm. The catalysed reaction is ATP + H2O = ADP + phosphate + H(+). In terms of biological role, the RuvA-RuvB-RuvC complex processes Holliday junction (HJ) DNA during genetic recombination and DNA repair, while the RuvA-RuvB complex plays an important role in the rescue of blocked DNA replication forks via replication fork reversal (RFR). RuvA specifically binds to HJ cruciform DNA, conferring on it an open structure. The RuvB hexamer acts as an ATP-dependent pump, pulling dsDNA into and through the RuvAB complex. RuvB forms 2 homohexamers on either side of HJ DNA bound by 1 or 2 RuvA tetramers; 4 subunits per hexamer contact DNA at a time. Coordinated motions by a converter formed by DNA-disengaged RuvB subunits stimulates ATP hydrolysis and nucleotide exchange. Immobilization of the converter enables RuvB to convert the ATP-contained energy into a lever motion, pulling 2 nucleotides of DNA out of the RuvA tetramer per ATP hydrolyzed, thus driving DNA branch migration. The RuvB motors rotate together with the DNA substrate, which together with the progressing nucleotide cycle form the mechanistic basis for DNA recombination by continuous HJ branch migration. Branch migration allows RuvC to scan DNA until it finds its consensus sequence, where it cleaves and resolves cruciform DNA. In Corynebacterium aurimucosum (strain ATCC 700975 / DSM 44827 / CIP 107346 / CN-1) (Corynebacterium nigricans), this protein is Holliday junction branch migration complex subunit RuvB.